A 144-amino-acid chain; its full sequence is Transcriptional regulator MraZ (144 aa).

2 consecutive SpoVT-AbrB domains span residues Thr6–Val48 and Ala77–Arg120.

It belongs to the MraZ family. In terms of assembly, forms oligomers.

It is found in the cytoplasm. Its subcellular location is the nucleoid. This chain is Transcriptional regulator MraZ, found in Nocardioides sp. (strain ATCC BAA-499 / JS614).